The primary structure comprises 245 residues: MNNKFDALKDDDSGDHDQNEENSTQKDGEKEKTERDKNQSSSKRKAVVPGPAEHPLQYNYTFWYSRRTPGRPTSSQSYEQNIKQIGTFASVEQFWRFYSHMVRPGDLTGHSDFHLFKEGIKPMWEDDANKNGGKWIIRLRKGLASRCWENLILAMLGEQFMVGEEICGAVVSVRFQEDIISIWNKTASDQATTARIRDTLRRVLNLPPNTIMEYKTHTDSIKMPGRLGPQRLLFQNLWKPRLNVP.

The span at 1 to 38 (MNNKFDALKDDDSGDHDQNEENSTQKDGEKEKTERDKN) shows a compositional bias: basic and acidic residues. Positions 1–52 (MNNKFDALKDDDSGDHDQNEENSTQKDGEKEKTERDKNQSSSKRKAVVPGPA) are disordered. Serine 13 carries the phosphoserine modification. The tract at residues 54 to 57 (HPLQ) is EIF4EBP1/2/3 binding. Position 78–79 (78–79 (YE)) interacts with mRNA. The segment at 95-99 (WRFYS) is EIF4EBP1/2/3 binding. MRNA-binding positions include histidine 110 and 124-125 (WE). Position 134 is an N6-acetyllysine; alternate (lysine 134). Residue lysine 134 forms a Glycyl lysine isopeptide (Lys-Gly) (interchain with G-Cter in ISG15); alternate linkage. The segment at 150 to 157 (NLILAMLG) is EIF4EBP1/2/3 binding. MRNA-binding positions include 174–179 (RFQEDI) and 222–224 (KMP). A Glycyl lysine isopeptide (Lys-Gly) (interchain with G-Cter in ISG15) cross-link involves residue lysine 222.

The protein belongs to the eukaryotic initiation factor 4E family. In terms of assembly, interacts with EIF4EBP1, EIF4EBP2 and EIF4EBP3. Does not interact with eIF4G (EIF4G1, EIF4G2 or EIF4G3). Component of the 4EHP-GYF2 complex, at least composed of EIF4E2, GIGYF2 and ZNF598. Interacts with GIGYF2 (via the 4EHP-binding motif); the interaction is direct. Interacts with EIF4ENIF1/4E-T (via YXXXXLphi motif); increasing affinity for the 7-methylguanosine-containing mRNA cap. Ubiquitinated by ARIH1. The consequences of ubiquitination are however unclear: according to a report, EIF4E2 ubiquitination leads to promote EIF4E2 cap-binding and protein translation arrest. According to another report ubiquitination leads to its subsequent degradation. In terms of processing, ISGylation enhances its cap structure-binding activity and translation-inhibition activity.

Its subcellular location is the cytoplasm. The protein resides in the P-body. Its function is as follows. Recognizes and binds the 7-methylguanosine-containing mRNA cap during an early step in the initiation. Acts as a repressor of translation initiation. In contrast to EIF4E, it is unable to bind eIF4G (EIF4G1, EIF4G2 or EIF4G3), suggesting that it acts by competing with EIF4E and block assembly of eIF4F at the cap. In P-bodies, component of a complex that promotes miRNA-mediated translational repression. Involved in virus-induced host response by mediating miRNA MIR34A-induced translational silencing which controls IFNB1 production by a negative feedback mechanism. Functionally, component of the 4EHP-GYF2 complex, a multiprotein complex that acts as a repressor of translation initiation. In association with GIGYF2, assists ribosome-associated quality control (RQC) by sequestering the mRNA cap, blocking ribosome initiation and decreasing the translational load on problematic messages. Part of a pathway that works in parallel to RQC-mediated degradation of the stalled nascent polypeptide. GIGYF2 and EIF4E2 work downstream and independently of ZNF598, which seems to work as a scaffold that can recruit them to faulty mRNA even if alternative recruitment mechanisms may exist. In terms of biological role, (Microbial infection) Upon SARS coronavirus-2/SARS-CoV-2 infection, the interaction with non-structural protein 2 (nsp2) with GIGYF2 enhances GIGYF2 binding to EIF4E2 and increases repression of translation initiation of genes involved in antiviral innate immune response such as IFNB1. This is Eukaryotic translation initiation factor 4E type 2 from Homo sapiens (Human).